The following is an 85-amino-acid chain: Cytochrome b (85 aa).

The next 3 membrane-spanning stretches (helical) occupy residues 1-8 (LTGLFLAM), 32-53 (WLIRNIHANGASFFFICIYLHI), and 68-85 (WNVGVVLLLLVMMTAFVG). Residues H38 and H52 each coordinate heme b.

Belongs to the cytochrome b family. As to quaternary structure, the cytochrome bc1 complex contains 3 respiratory subunits (MT-CYB, CYC1 and UQCRFS1), 2 core proteins (UQCRC1 and UQCRC2) and probably 6 low-molecular weight proteins. Requires heme b as cofactor.

It is found in the mitochondrion inner membrane. Its function is as follows. Component of the ubiquinol-cytochrome c reductase complex (complex III or cytochrome b-c1 complex) that is part of the mitochondrial respiratory chain. The b-c1 complex mediates electron transfer from ubiquinol to cytochrome c. Contributes to the generation of a proton gradient across the mitochondrial membrane that is then used for ATP synthesis. The polypeptide is Cytochrome b (mt-cyb) (Pomoxis nigromaculatus (Black crappie)).